Reading from the N-terminus, the 689-residue chain is MKTFCGRANPTTGSLEWVEEDEDYDYHQEIARSRYADMLHDKDRNMKYYQGIRAAVSRVKGRGEKAIVLDIGTGTGLLSMMAASAGADFCYAVEVFKPMANAAVKIVEKNGFGDKIKVINKHSTEVTVGPDGDMQCRANILVTELFDTELIGEGALPTYEHAHKYLVQEGCEAVPHRATVYVQLVESKRMWSWNKLFPVHVEAEDGEKIIVSPSEMENCPGVPSVCDIQLNQMPSSDFTILSDVVTMFSVDFSKPVRSASTCYRAQLDPVKSGKAQIVLSWWDIDMDPSGTINCTMAPYWVKPMSAFQWRDHWMQCVYFLPKEEQVLQGEKVHLTACRDEYSVWYTLQKAREEDESKADARVESPVCRCQAHLLWNRPRFGELNDQNRTRQYIKSLMSVLRTDSVCLCISDGSLLPVLAHYLGAEQVFTLENSAVSCSVMKKFFKANHLEDKIKIVEARPELLTSSHLEEKKISVLVGEPFFTTSLLPWHNLYFWYARTAVTEHLASDVTVLPQSAALHMMIVEFQDLWRIRSPCGTCEGFDVQTMDDMIKNSLNFRESKEAEPHPLWEYPCKSLSNPQEVLLFDFRKTVPQHCLSTEGSVNLLRKGKSHGAVLWMEYHLTADISVSTGLMQISNEKGNCEWNPHCKQAVYFFSSVIESETLADVPTAVTYAIKFDTKTGEIAMDFKLL.

2 SAM-dependent MTase PRMT-type domains span residues Ser-14–Trp-344 and Asp-359–Asp-685. Catalysis depends on residues Glu-144 and Glu-153.

The protein belongs to the class I-like SAM-binding methyltransferase superfamily. Protein arginine N-methyltransferase family. PRMT7 subfamily.

It localises to the cytoplasm. It is found in the cytosol. Its subcellular location is the nucleus. The catalysed reaction is L-arginyl-[protein] + S-adenosyl-L-methionine = N(omega)-methyl-L-arginyl-[protein] + S-adenosyl-L-homocysteine + H(+). Functionally, arginine methyltransferase that can both catalyze the formation of omega-N monomethylarginine (MMA) and symmetrical dimethylarginine (sDMA), with a preference for the formation of MMA. Specifically mediates the symmetrical dimethylation of arginine residues in the small nuclear ribonucleoproteins Sm D1 (SNRPD1) and Sm D3 (SNRPD3); such methylation being required for the assembly and biogenesis of snRNP core particles. Specifically mediates the symmetric dimethylation of histone H4 'Arg-3' to form H4R3me2s. Plays a role in gene imprinting by being recruited by CTCFL at the H19 imprinted control region (ICR) and methylating histone H4 to form H4R3me2s, possibly leading to recruit DNA methyltransferases at these sites. May also play a role in embryonic stem cell (ESC) pluripotency. Also able to mediate the arginine methylation of histone H2A and myelin basic protein (MBP) in vitro; the relevance of such results is however unclear in vivo. The polypeptide is Protein arginine N-methyltransferase 7 (PRMT7) (Gallus gallus (Chicken)).